A 333-amino-acid chain; its full sequence is Adenosine deaminase (333 aa).

Residues H12 and H14 each coordinate Zn(2+). Residues H14, D16, and G170 each contribute to the substrate site. Residue H197 coordinates Zn(2+). The Proton donor role is filled by E200. D278 is a Zn(2+) binding site. Residue D279 coordinates substrate.

The protein belongs to the metallo-dependent hydrolases superfamily. Adenosine and AMP deaminases family. Adenosine deaminase subfamily. Zn(2+) serves as cofactor.

It catalyses the reaction adenosine + H2O + H(+) = inosine + NH4(+). It carries out the reaction 2'-deoxyadenosine + H2O + H(+) = 2'-deoxyinosine + NH4(+). In terms of biological role, catalyzes the hydrolytic deamination of adenosine and 2-deoxyadenosine. This is Adenosine deaminase from Salmonella enteritidis PT4 (strain P125109).